Reading from the N-terminus, the 569-residue chain is Dihydroorotate dehydrogenase (quinone), mitochondrial (569 aa).

The transit peptide at 1-23 directs the protein to the mitochondrion; sequence MISKLKPQFMFLPKKHILSYCRK. Residues 143-163 form a helical membrane-spanning segment; the sequence is IIFLLFVSLFGLYGFFESYNP. FMN contacts are provided by residues 225–229 and threonine 249; that span reads AGFDK. Lysine 229 is a substrate binding site. Residues 274–278 and asparagine 342 contribute to the substrate site; that span reads NSCGF. Asparagine 342 contacts FMN. Serine 345 acts as the Nucleophile in catalysis. Substrate is bound at residue asparagine 347. Residue lysine 429 participates in FMN binding. 458-459 provides a ligand contact to substrate; that stretch reads NT. Residues 477 to 478, 505 to 507, and 528 to 529 each bind FMN; these read SG, SGG, and YS.

This sequence belongs to the dihydroorotate dehydrogenase family. Type 2 subfamily. In terms of assembly, monomer. The cofactor is FMN.

The protein localises to the mitochondrion inner membrane. The enzyme catalyses (S)-dihydroorotate + a quinone = orotate + a quinol. It functions in the pathway pyrimidine metabolism; UMP biosynthesis via de novo pathway; orotate from (S)-dihydroorotate (quinone route): step 1/1. Catalyzes the conversion of dihydroorotate to orotate with quinone as electron acceptor. The chain is Dihydroorotate dehydrogenase (quinone), mitochondrial from Plasmodium falciparum (isolate 3D7).